The primary structure comprises 92 residues: Antifungal protein B (92 aa).

The first 18 residues, 1–18 (MQITSIAIVFFAAMGAVA), serve as a signal peptide directing secretion. The propeptide occupies 19 to 34 (NPIARESDDLDARDVQ). Cystine bridges form between Cys-42/Cys-70, Cys-49/Cys-77, and Cys-62/Cys-88.

It localises to the secreted. It is found in the host cytoplasm. Its function is as follows. Antifungal protein that acts as an inhibitor of growth of human pathogenic molds and yeasts. Is active against the model organism Neurospora crassa, the opportunistic human pathogens Aspergillus fumigatus, Trichophyton rubrum, and Aspergillus terreus. Provokes a reduction of the incidence of infections caused by Penicillium digitatum and Penicillium italicum in oranges and by Penicillium expansum in apples. Low doses of pafB have self-inhibition activity. Also shows activity against the model yeast Saccaromyces cerevisiae and the opportunistic human pathogen Candida albicans. No antibacterial activity is observed on the Gram-negative Escherichia coli and the Gram-positive Bacillus subtilis. Finally, also shows anti-viral activity in a model of HCoV 229E infected L132 cells. The chain is Antifungal protein B from Penicillium chrysogenum (Penicillium notatum).